Consider the following 156-residue polypeptide: Small ribosomal subunit protein uS7 (156 aa).

Belongs to the universal ribosomal protein uS7 family. As to quaternary structure, part of the 30S ribosomal subunit. Contacts proteins S9 and S11.

Functionally, one of the primary rRNA binding proteins, it binds directly to 16S rRNA where it nucleates assembly of the head domain of the 30S subunit. Is located at the subunit interface close to the decoding center, probably blocks exit of the E-site tRNA. The polypeptide is Small ribosomal subunit protein uS7 (Arthrospira platensis (Spirulina platensis)).